The chain runs to 188 residues: Crossover junction endodeoxyribonuclease RuvC (188 aa).

Active-site residues include aspartate 7, glutamate 68, and aspartate 141. Positions 7, 68, and 141 each coordinate Mg(2+).

This sequence belongs to the RuvC family. In terms of assembly, homodimer which binds Holliday junction (HJ) DNA. The HJ becomes 2-fold symmetrical on binding to RuvC with unstacked arms; it has a different conformation from HJ DNA in complex with RuvA. In the full resolvosome a probable DNA-RuvA(4)-RuvB(12)-RuvC(2) complex forms which resolves the HJ. Mg(2+) is required as a cofactor.

The protein resides in the cytoplasm. The catalysed reaction is Endonucleolytic cleavage at a junction such as a reciprocal single-stranded crossover between two homologous DNA duplexes (Holliday junction).. In terms of biological role, the RuvA-RuvB-RuvC complex processes Holliday junction (HJ) DNA during genetic recombination and DNA repair. Endonuclease that resolves HJ intermediates. Cleaves cruciform DNA by making single-stranded nicks across the HJ at symmetrical positions within the homologous arms, yielding a 5'-phosphate and a 3'-hydroxyl group; requires a central core of homology in the junction. The consensus cleavage sequence is 5'-(A/T)TT(C/G)-3'. Cleavage occurs on the 3'-side of the TT dinucleotide at the point of strand exchange. HJ branch migration catalyzed by RuvA-RuvB allows RuvC to scan DNA until it finds its consensus sequence, where it cleaves and resolves the cruciform DNA. The sequence is that of Crossover junction endodeoxyribonuclease RuvC from Streptomyces coelicolor (strain ATCC BAA-471 / A3(2) / M145).